A 272-amino-acid polypeptide reads, in one-letter code: Putative hydro-lyase AZC_4080 (272 aa).

This sequence belongs to the D-glutamate cyclase family.

The sequence is that of Putative hydro-lyase AZC_4080 from Azorhizobium caulinodans (strain ATCC 43989 / DSM 5975 / JCM 20966 / LMG 6465 / NBRC 14845 / NCIMB 13405 / ORS 571).